The following is a 422-amino-acid chain: Proton-gated ion channel subunit pbo-6 (422 aa).

Residues 1 to 20 (MQCSFLTIFIFITTVTVGVA) form the signal peptide. The Extracellular segment spans residues 21-233 (EFSEQYQGSS…IKVARKPFYY (213 aa)). A disulfide bridge links cysteine 151 with cysteine 165. The next 3 helical transmembrane spans lie at 234 to 254 (LISL…GLFA), 268 to 288 (LGVT…EKVP), and 294 to 314 (VPLL…ATIL). The Cytoplasmic segment spans residues 315–378 (TSTVMRVHAK…GEVSRRMDYL (64 aa)). The helical transmembrane segment at 379-399 (LASVFIIIISTPTLYLFYMCF) threads the bilayer.

The protein belongs to the ligand-gated ion channel (TC 1.A.9) family. Acetylcholine receptor (TC 1.A.9.1) subfamily. In terms of assembly, the functional channel is a hetero-oligomer of pbo-5 and pbo-6. Expressed in the posterior body muscles.

It localises to the membrane. Its function is as follows. Forms a proton-gated ion channel with pbo-5 that is activated by acidification of the posterior coelomic space, leading to posterior body wall muscle contraction (pBoc) during the defecation cycle. Not necessary for stimulation of posterior body contraction (pBoc). Does not bind neurotransmitters such as acetylcholine, gamma-aminobutyric acid, glycine, serotonin, glutamate or choline. The polypeptide is Proton-gated ion channel subunit pbo-6 (Caenorhabditis elegans).